Here is an 881-residue protein sequence, read N- to C-terminus: Alanine--tRNA ligase (881 aa).

Zn(2+)-binding residues include H566, H570, C668, and H672.

This sequence belongs to the class-II aminoacyl-tRNA synthetase family. It depends on Zn(2+) as a cofactor.

It is found in the cytoplasm. The enzyme catalyses tRNA(Ala) + L-alanine + ATP = L-alanyl-tRNA(Ala) + AMP + diphosphate. Functionally, catalyzes the attachment of alanine to tRNA(Ala) in a two-step reaction: alanine is first activated by ATP to form Ala-AMP and then transferred to the acceptor end of tRNA(Ala). Also edits incorrectly charged Ser-tRNA(Ala) and Gly-tRNA(Ala) via its editing domain. The chain is Alanine--tRNA ligase from Frankia alni (strain DSM 45986 / CECT 9034 / ACN14a).